A 404-amino-acid chain; its full sequence is Cysteine desulfurase IscS (404 aa).

Pyridoxal 5'-phosphate is bound by residues 75 to 76, Asn155, Gln183, and 203 to 205; these read AT and SAH. Lys206 is subject to N6-(pyridoxal phosphate)lysine. Pyridoxal 5'-phosphate is bound at residue Thr243. Cys328 (cysteine persulfide intermediate) is an active-site residue. Cys328 is a [2Fe-2S] cluster binding site.

Belongs to the class-V pyridoxal-phosphate-dependent aminotransferase family. NifS/IscS subfamily. As to quaternary structure, homodimer. Forms a heterotetramer with IscU, interacts with other sulfur acceptors. It depends on pyridoxal 5'-phosphate as a cofactor.

It is found in the cytoplasm. The enzyme catalyses (sulfur carrier)-H + L-cysteine = (sulfur carrier)-SH + L-alanine. It functions in the pathway cofactor biosynthesis; iron-sulfur cluster biosynthesis. Its function is as follows. Master enzyme that delivers sulfur to a number of partners involved in Fe-S cluster assembly, tRNA modification or cofactor biosynthesis. Catalyzes the removal of elemental sulfur atoms from cysteine to produce alanine. Functions as a sulfur delivery protein for Fe-S cluster synthesis onto IscU, an Fe-S scaffold assembly protein, as well as other S acceptor proteins. The sequence is that of Cysteine desulfurase IscS from Pseudomonas syringae pv. tomato (strain ATCC BAA-871 / DC3000).